Here is a 239-residue protein sequence, read N- to C-terminus: Protein UL24 homolog (239 aa).

The interval 212–239 is disordered; the sequence is TPKLGNSKTSKRKRRNSKKQDFKKLVKN. The segment covering 229–239 has biased composition (basic and acidic residues); sequence KKQDFKKLVKN.

This sequence belongs to the herpesviridae UL24 family.

Its subcellular location is the virion. The protein localises to the host cytoplasm. It is found in the host nucleus. The protein resides in the host nucleolus. It localises to the host Golgi apparatus. In terms of biological role, may participate in nuclear egress of viral particles. Plays a role in the dispersal of several host nucleolar proteins including NCL/nucleolin and NPM1. Since deletion of host NCL/nucleolin negatively impact on nuclear egress, UL24 supposedly acts on this process through its effect on host nucleoli. This chain is Protein UL24 homolog (U49), found in Homo sapiens (Human).